The sequence spans 1046 residues: MSKFFIDRPIFAWVIALVIMLAGGLSILSLPVNQYPAIAPPAIAVQVSYPGASAETVQDTVVQVIEQQMNGIDNLRYISSESNSDGSMTITVTFEQGTDPDIAQVQVQNKLQLATPLLPQEVQRQGIRVTKAVKNFLMVVGVVSTDGSMTKEDLSNYIVSNIQDPLSRTKGVGDFQVFGSQYSMRIWLDPAKLNSYQLTPGDVSSAIQAQNVQISSGQLGGLPAVKGQQLNATIIGKTRLQTAEQFENILLKVNPDGSQVRLKDVADVGLGGQDYSINAQFNGSPASGIAIKLATGANALDTAKAIRQTIANLEPFMPQGMKVVYPYDTTPVVSASIHEVVKTLGEAILLVFLVMYLFLQNFRATLIPTIAVPVVLLGTFGVLAAFGFSINTLTMFGMVLAIGLLVDDAIVVVENVERVMAEEGLSPREAARKSMGQIQGALVGIAMVLSAVFLPMAFFGGSTGVIYRQFSITIVSAMALSVIVALILTPALCATMLKPIEKGDHGEHKGGFFGWFNRMFLSTTHGYERGVASILKHRAPYLLIYVVIVAGMIWMFTRIPTAFLPDEDQGVLFAQVQTPPGSSAERTQVVVDSMREYLLEKESSSVSSVFTVTGFNFAGRGQSSGMAFIMLKPWEERPGGENSVFELAKRAQMHFFSFKDAMVFAFAPPSVLELGNATGFDLFLQDQAGVGHEVLLQARNKFLMLAAQNPALQRVRPNGMSDEPQYKLEIDDEKASALGVSLADINSTVSIAWGSSYVNDFIDRGRVKRVYLQGRPDARMNPDDLSKWYVRNDKGEMVPFNAFATGKWEYGSPKLERYNGVPAMEILGEPAPGLSSGDAMAAVEEIVKQLPKGVGYSWTGLSYEERLSGSQAPALYALSLLVVFLCLAALYESWSIPFSVMLVVPLGVIGALLATSMRGLSNDVFFQVGLLTTIGLSAKNAILIVEFAKELHEQGKGIVEAAIEACRMRLRPIVMTSLAFILGVVPLAISTGAGSGSQHAIGTGVIGGMVTATVLAIFWVPLFYVAVSTLFKDEASKQQASVEKGQ.

Topologically, residues 1-9 (MSKFFIDRP) are cytoplasmic. Residues 10–28 (IFAWVIALVIMLAGGLSIL) form a helical membrane-spanning segment. The Periplasmic portion of the chain corresponds to 29 to 339 (SLPVNQYPAI…TPVVSASIHE (311 aa)). A helical transmembrane segment spans residues 340 to 359 (VVKTLGEAILLVFLVMYLFL). Residues 360–365 (QNFRAT) are Cytoplasmic-facing. A helical membrane pass occupies residues 366–385 (LIPTIAVPVVLLGTFGVLAA). At 386–391 (FGFSIN) the chain is on the periplasmic side. A helical membrane pass occupies residues 392 to 413 (TLTMFGMVLAIGLLVDDAIVVV). The Cytoplasmic segment spans residues 414–441 (ENVERVMAEEGLSPREAARKSMGQIQGA). The helical transmembrane segment at 442–460 (LVGIAMVLSAVFLPMAFFG) threads the bilayer. The Periplasmic portion of the chain corresponds to 461 to 473 (GSTGVIYRQFSIT). The helical transmembrane segment at 474 to 496 (IVSAMALSVIVALILTPALCATM) threads the bilayer. Over 497–538 (LKPIEKGDHGEHKGGFFGWFNRMFLSTTHGYERGVASILKHR) the chain is Cytoplasmic. The chain crosses the membrane as a helical span at residues 539–557 (APYLLIYVVIVAGMIWMFT). The Periplasmic segment spans residues 558–871 (RIPTAFLPDE…SYEERLSGSQ (314 aa)). Residues 872–891 (APALYALSLLVVFLCLAALY) traverse the membrane as a helical segment. The Cytoplasmic portion of the chain corresponds to 892–897 (ESWSIP). Residues 898-917 (FSVMLVVPLGVIGALLATSM) form a helical membrane-spanning segment. The Periplasmic portion of the chain corresponds to 918 to 923 (RGLSND). The helical transmembrane segment at 924 to 945 (VFFQVGLLTTIGLSAKNAILIV) threads the bilayer. The Cytoplasmic portion of the chain corresponds to 946–972 (EFAKELHEQGKGIVEAAIEACRMRLRP). A helical membrane pass occupies residues 973 to 991 (IVMTSLAFILGVVPLAIST). Residues 992 to 1004 (GAGSGSQHAIGTG) lie on the Periplasmic side of the membrane. Residues 1005 to 1027 (VIGGMVTATVLAIFWVPLFYVAV) form a helical membrane-spanning segment. Residues 1028–1046 (STLFKDEASKQQASVEKGQ) are Cytoplasmic-facing.

Belongs to the resistance-nodulation-cell division (RND) (TC 2.A.6) family. Component of the MexAB-OprM multidrug efflux complex, composed of six MexA subunits forming a hexameric tube, binding to a MexB trimer, which interact with the trimeric OprM outer membrane channel protein. OprM is thought to not directly contact MexB; instead, MexA joins MexB and OprM by forming a funnel-like hexamer anchored to the inner membrane. MexA may initially form a hexameric ring complex with MexB prior to OprM, then OprM undergoes a conformational change as it contacts MexA, allowing the periplasmic gate to open. It is thought that, under high intracellular substrate concentration, MexB ejects substrate into the tunnel formed by MexA-OprM; as the substrate level declines, conformational changes in MexB cause efflux to reduce and stop and the complex shifts to the closed state. Acts as a substrate:proton antiporter and activity is enhanced significantly when in complex with MexA and OprM, in vitro.

It is found in the cell inner membrane. Export of antibiotics and solvents is dramatically decreased in the presence of the protonophore carbonyl cyanide m-chlorophenylhydrazone (CCCP), therefore may be driven by a proton gradient. Antibiotic efflux is inhibited by pyridopyrimidine derivatives, such as ABI-PP, acting by binding to a hydrophobic pocket in MexB. In terms of biological role, the inner membrane transporter component of the MexAB-OprM efflux system that confers multidrug resistance. Functions as the major efflux pump for n-hexane and p-xylene efflux. Has been shown in one study to be involved in the active efflux of the autoinducer N-(3-oxododecanoyl) homoserine lactone, thereby playing an indirect role in quorum-sensing; but has been shown in another study not to be involved in efflux of this autoinducer. Over-expression of the pump increases antibiotic and solvent efflux capacities. Implicated in the secretion of the siderophore pyoverdine. The chain is Multidrug resistance protein MexB (mexB) from Pseudomonas aeruginosa (strain ATCC 15692 / DSM 22644 / CIP 104116 / JCM 14847 / LMG 12228 / 1C / PRS 101 / PAO1).